The chain runs to 775 residues: MEPKPFFLCIIFLLFCSSSSEILQKQTYIVQLHPNSETAKTFASKFDWHLSFLQEAVLGVEEEEEEPSSRLLYSYGSAIEGFAAQLTESEAEILRYSPEVVAVRPDHVLQVQTTYSYKFLGLDGFGNSGVWSKSRFGQGTIIGVLDTGVWPESPSFDDTGMPSIPRKWKGICQEGESFSSSSCNRKLIGARFFIRGHRVANSPEESPNMPREYISARDSTGHGTHTASTVGGSSVSMANVLGNGAGVARGMAPGAHIAVYKVCWFNGCYSSDILAAIDVAIQDKVDVLSLSLGGFPIPLYDDTIAIGTFRAMERGISVICAAGNNGPIESSVANTAPWVSTIGAGTLDRRFPAVVRLANGKLLYGESLYPGKGIKNAGREVEVIYVTGGDKGSEFCLRGSLPREEIRGKMVICDRGVNGRSEKGEAVKEAGGVAMILANTEINQEEDSIDVHLLPATLIGYTESVLLKAYVNATVKPKARIIFGGTVIGRSRAPEVAQFSARGPSLANPSILKPDMIAPGVNIIAAWPQNLGPTGLPYDSRRVNFTVMSGTSMSCPHVSGITALIRSAYPNWSPAAIKSALMTTADLYDRQGKAIKDGNKPAGVFAIGAGHVNPQKAINPGLVYNIQPVDYITYLCTLGFTRSDILAITHKNVSCNGILRKNPGFSLNYPSIAVIFKRGKTTEMITRRVTNVGSPNSIYSVNVKAPEGIKVIVNPKRLVFKHVDQTLSYRVWFVLKKKNRGGKVASFAQGQLTWVNSHNLMQRVRSPISVTLKTN.

The signal sequence occupies residues 1-20; that stretch reads MEPKPFFLCIIFLLFCSSSS. The region spanning 27-111 is the Inhibitor I9 domain; it reads TYIVQLHPNS…AVRPDHVLQV (85 aa). Positions 116-618 constitute a Peptidase S8 domain; sequence SYKFLGLDGF…AGHVNPQKAI (503 aa). Residues D146 and H222 each act as charge relay system in the active site. Residues 388-470 form the PA domain; that stretch reads GGDKGSEFCL…YTESVLLKAY (83 aa). N472 and N544 each carry an N-linked (GlcNAc...) asparagine glycan. The Charge relay system role is filled by S552. N-linked (GlcNAc...) asparagine glycosylation is present at N652.

Belongs to the peptidase S8 family. As to expression, mostly expressed in leaves and cotyledons (especially in epidermal cells), and, to a lower extent, in floral buds, stems, and siliques. Strongly expressed in stomatal precursor cells (meristemoids and guard mother cells).

Its subcellular location is the secreted. It is found in the extracellular space. It localises to the apoplast. The protein resides in the cell membrane. Its function is as follows. Serine protease involved in the negative regulation of stomatal density and distribution. Not active on EPFL6 (AC Q1PEY6). Positive regulator of water use efficiency (WUE). This chain is Subtilisin-like protease SBT1.2, found in Arabidopsis thaliana (Mouse-ear cress).